The primary structure comprises 272 residues: Ethanolamine ammonia-lyase small subunit (272 aa).

Residues Val161, Glu182, and Cys211 each coordinate adenosylcob(III)alamin.

Belongs to the EutC family. In terms of assembly, the basic unit is a heterodimer which dimerizes to form tetramers. The heterotetramers trimerize; 6 large subunits form a core ring with 6 small subunits projecting outwards. Adenosylcob(III)alamin is required as a cofactor.

The protein resides in the bacterial microcompartment. The enzyme catalyses ethanolamine = acetaldehyde + NH4(+). It participates in amine and polyamine degradation; ethanolamine degradation. Functionally, catalyzes the deamination of various vicinal amino-alcohols to oxo compounds. Allows this organism to utilize ethanolamine as the sole source of nitrogen and carbon in the presence of external vitamin B12. The sequence is that of Ethanolamine ammonia-lyase small subunit from Xanthomonas campestris pv. campestris (strain B100).